The following is a 29-amino-acid chain: Galanin (29 aa).

Alanine 29 is subject to Alanine amide.

This sequence belongs to the galanin family.

It localises to the secreted. Contracts smooth muscle of the gastrointestinal and genitourinary tract, regulates growth hormone release, modulates insulin release, and may be involved in the control of adrenal secretion. This Oncorhynchus mykiss (Rainbow trout) protein is Galanin (gal).